Consider the following 163-residue polypeptide: Epithelial membrane protein 3 (163 aa).

Residues 4–24 (LLLVVSALHILILVLLFVATL) form a helical membrane-spanning segment. N-linked (GlcNAc...) asparagine glycans are attached at residues Asn-46 and Asn-56. Helical transmembrane passes span 66 to 86 (VQAL…LFMF), 100 to 120 (TGLC…IYAI), and 139 to 159 (FALA…YIHL).

Belongs to the PMP-22/EMP/MP20 family.

It is found in the membrane. Probably involved in cell proliferation and cell-cell interactions. The chain is Epithelial membrane protein 3 (Emp3) from Mus musculus (Mouse).